A 157-amino-acid polypeptide reads, in one-letter code: Transcription factor HES-2 (157 aa).

Residues 13–70 form the bHLH domain; that stretch reads LRKNLKPLLEKRRRARINESLSQLKGLVLPLLGAETSRSSKLEKADILEMTVRFLQEQ. The Orange domain maps to 86–119; sequence YLEGYRACLARLARVLPACSVLEPAVSARLLEHL. Residues 124 to 157 form a disordered region; sequence VSDDSPSLTLPPAPAPAPSPPVPPPGSSGLWRPW. Positions 132-149 are enriched in pro residues; the sequence is TLPPAPAPAPSPPVPPPG. The WRPW motif signature appears at 154–157; sequence WRPW.

As to quaternary structure, transcription repression requires formation of a complex with a corepressor protein of the Groucho/TLE family.

The protein resides in the nucleus. In terms of biological role, transcriptional repressor of genes that require a bHLH protein for their transcription. The chain is Transcription factor HES-2 (Hes2) from Mus musculus (Mouse).